Reading from the N-terminus, the 363-residue chain is S-adenosylmethionine:tRNA ribosyltransferase-isomerase (363 aa).

Belongs to the QueA family. Monomer.

It localises to the cytoplasm. The catalysed reaction is 7-aminomethyl-7-carbaguanosine(34) in tRNA + S-adenosyl-L-methionine = epoxyqueuosine(34) in tRNA + adenine + L-methionine + 2 H(+). It functions in the pathway tRNA modification; tRNA-queuosine biosynthesis. Its function is as follows. Transfers and isomerizes the ribose moiety from AdoMet to the 7-aminomethyl group of 7-deazaguanine (preQ1-tRNA) to give epoxyqueuosine (oQ-tRNA). The chain is S-adenosylmethionine:tRNA ribosyltransferase-isomerase from Magnetococcus marinus (strain ATCC BAA-1437 / JCM 17883 / MC-1).